A 186-amino-acid chain; its full sequence is Homeobox expressed in ES cells 1 (186 aa).

The homeobox DNA-binding region spans 109–168 (GRRPRTAFTRSQIEILENVFRVNSYPGIDIREELAGKLALDEDRIQIWFQNRRAKLKRSH).

This sequence belongs to the ANF homeobox family. Interacts (via N-terminus) with zyx.

It is found in the nucleus. Its function is as follows. Regulates the earliest stages of development of the anterior neural plate. Plays a role in forebrain development by inhibiting the expression of otx2 and pax6 in the rostral region of the anterior neural plate. Necessary for both neural differentiation and neural patterning. Controls Spemann organizer development. May act as a transcriptional repressor. This chain is Homeobox expressed in ES cells 1, found in Xenopus tropicalis (Western clawed frog).